Consider the following 681-residue polypeptide: Amine oxidase [copper-containing] alpha 3, peroxisomal (681 aa).

323-334 (YLDCGDFGCGQC) provides a ligand contact to substrate. The active-site Proton acceptor is the Asp-325. Cys-344 and Cys-370 are oxidised to a cystine. 410 to 415 (VGNYDY) contributes to the substrate binding site. The active-site Schiff-base intermediate with substrate; via topaquinone is Tyr-413. Tyr-413 is subject to 2',4',5'-topaquinone. Residues His-470 and His-472 each contribute to the Cu cation site. Residues Asp-481, Asp-621, and Ile-622 each coordinate Mn(2+). His-632 is a Cu cation binding site.

Belongs to the copper/topaquinone oxidase family. Topaquinone (TPQ) is generated by copper-dependent autoxidation of a specific tyrosyl residue. As to expression, mostly expressed in stems, and, at lower levels, in flowers and leaves. Mainly detectable in stipules, hypocotyls and roots.

The protein localises to the peroxisome. It catalyses the reaction a primary methyl amine + O2 + H2O = an aldehyde + H2O2 + NH4(+). It functions in the pathway amine and polyamine degradation; putrescine degradation. Copper amine oxidase that can use putrescine and spermidine as substrates. Involved in putrescine catabolism in peroxisomes. The protein is Amine oxidase [copper-containing] alpha 3, peroxisomal of Arabidopsis thaliana (Mouse-ear cress).